Consider the following 274-residue polypeptide: Penicillin-insensitive murein endopeptidase (274 aa).

An N-terminal signal peptide occupies residues 1–19 (MKNTVIALLALLASAGSLA). Cystine bridges form between Cys-44/Cys-265, Cys-187/Cys-235, and Cys-216/Cys-223. Zn(2+)-binding residues include His-110, His-113, Asp-120, Asp-147, His-150, and His-211. Positions 224–263 (EDQAPPPPGDGCGAELQSWFEPPKPGSTPPVKKTPPPLPP) are disordered. The span at 245 to 263 (PPKPGSTPPVKKTPPPLPP) shows a compositional bias: pro residues.

This sequence belongs to the peptidase M74 family. Dimer. Zn(2+) serves as cofactor.

The protein resides in the periplasm. In terms of biological role, murein endopeptidase that cleaves the D-alanyl-meso-2,6-diamino-pimelyl amide bond that connects peptidoglycan strands. Likely plays a role in the removal of murein from the sacculus. In Klebsiella pneumoniae (strain 342), this protein is Penicillin-insensitive murein endopeptidase.